Here is a 278-residue protein sequence, read N- to C-terminus: MGIKIDGKRLAQDIREELKKQVENINNNEDVKLCMANILVGNDGGSQFYVRNQNKLCHALGIKVKNINLDECIKEEELLNIINELNNDNEVKGIILQLPLPKHLDESKITSAIDINKDIDGLSSISVGKLYKGEKCFVPCTPRGIIELIKTCDIDIEGSNAVVIGRSNIVGKPVAQLLLNENATVTICHSKTKNLKEICLNADILVSAIGKPHFITKDYVKEGAVVIDVGTSSVNGKMVGDVCFDEVIEKAAYVTPVPGGVGAMTTTMLIKNLCEGLK.

NADP(+) contacts are provided by residues 165 to 167 (GRS), Ser190, and Thr231.

Belongs to the tetrahydrofolate dehydrogenase/cyclohydrolase family. As to quaternary structure, homodimer.

It carries out the reaction (6R)-5,10-methylene-5,6,7,8-tetrahydrofolate + NADP(+) = (6R)-5,10-methenyltetrahydrofolate + NADPH. The catalysed reaction is (6R)-5,10-methenyltetrahydrofolate + H2O = (6R)-10-formyltetrahydrofolate + H(+). It participates in one-carbon metabolism; tetrahydrofolate interconversion. Catalyzes the oxidation of 5,10-methylenetetrahydrofolate to 5,10-methenyltetrahydrofolate and then the hydrolysis of 5,10-methenyltetrahydrofolate to 10-formyltetrahydrofolate. The polypeptide is Bifunctional protein FolD (Clostridium novyi (strain NT)).